A 129-amino-acid chain; its full sequence is Ig lambda-1 chain V region S43 (129 aa).

Residues 1 to 19 (MAWISLILSLLALSSGAIS) form the signal peptide. Gln20 bears the Pyrrolidone carboxylic acid mark. Residues 20–125 (QAVVTQESAL…HWVFGGGTKL (106 aa)) form the Ig-like domain.

The polypeptide is Ig lambda-1 chain V region S43 (Mus musculus (Mouse)).